The chain runs to 538 residues: Cytochrome P450 monooxygenase xanG (538 aa).

A helical membrane pass occupies residues methionine 44–leucine 64. N-linked (GlcNAc...) asparagine glycosylation is present at asparagine 378. Cysteine 489 lines the heme pocket.

It belongs to the cytochrome P450 family. Requires heme as cofactor.

It is found in the membrane. Its pathway is secondary metabolite biosynthesis. Functionally, cytochrome P450 monooxygenase; part of the gene cluster that mediates the biosynthesis of the isocyanide xanthocillin and its derivatives. The first step of the pathway consists in the conversion of tyrosine into a vinyl-isonitrile intermediate by the isocyanide synthase xanB. Subsequent oxidative dimerization of this intermediate to form xanthocillin may involve the cytochrome P450 monooxygenase xanG, whose expression is coregulated with that of XanB. Xanthocillin can be further modified by the isonitrile hydratase-like protein xanA which introduces N-formyl groups and the methyltransferase xanE which introduces methyl groups, leading to the production of several derivatives including fumiformamide. Finally, fumiformamide can be subject to both oxidative and reductive cyclization to yield melanocins E and F, respectively. The polypeptide is Cytochrome P450 monooxygenase xanG (Aspergillus fumigatus (strain ATCC MYA-4609 / CBS 101355 / FGSC A1100 / Af293) (Neosartorya fumigata)).